A 255-amino-acid polypeptide reads, in one-letter code: Poxin (255 aa).

Belongs to the poxin family. Highly divergent.

The enzyme catalyses 2',3'-cGAMP + H2O = Gp(2'-5')Ap(3') + H(+). Functionally, nuclease that cleaves 2',3'-cGAMP. The polypeptide is Poxin (Bombyx mori (Silk moth)).